The following is a 432-amino-acid chain: 3-phosphoshikimate 1-carboxyvinyltransferase (432 aa).

3-phosphoshikimate contacts are provided by lysine 23, serine 24, and arginine 28. Position 23 (lysine 23) interacts with phosphoenolpyruvate. Glycine 95 and arginine 123 together coordinate phosphoenolpyruvate. 4 residues coordinate 3-phosphoshikimate: serine 167, glutamine 169, aspartate 317, and lysine 344. Glutamine 169 provides a ligand contact to phosphoenolpyruvate. The active-site Proton acceptor is the aspartate 317. Residues arginine 348 and arginine 390 each coordinate phosphoenolpyruvate.

It belongs to the EPSP synthase family. In terms of assembly, monomer.

Its subcellular location is the cytoplasm. The enzyme catalyses 3-phosphoshikimate + phosphoenolpyruvate = 5-O-(1-carboxyvinyl)-3-phosphoshikimate + phosphate. The protein operates within metabolic intermediate biosynthesis; chorismate biosynthesis; chorismate from D-erythrose 4-phosphate and phosphoenolpyruvate: step 6/7. In terms of biological role, catalyzes the transfer of the enolpyruvyl moiety of phosphoenolpyruvate (PEP) to the 5-hydroxyl of shikimate-3-phosphate (S3P) to produce enolpyruvyl shikimate-3-phosphate and inorganic phosphate. The sequence is that of 3-phosphoshikimate 1-carboxyvinyltransferase from Staphylococcus aureus (strain MRSA252).